A 697-amino-acid polypeptide reads, in one-letter code: CENP-A multicopy suppressor protein 2 (697 aa).

A GATA-type; atypical zinc finger spans residues Cys351–Cys378. Positions Pro443–Asn484 are disordered. Residues Asn445–Ser455 show a composition bias toward polar residues.

In terms of assembly, interacts with CENP-A.

Its subcellular location is the nucleus. The protein resides in the chromosome. It is found in the centromere. In terms of biological role, required for proper chromosome segregation via regulation of CENP-A localization to the centromere. In Schizosaccharomyces pombe (strain 972 / ATCC 24843) (Fission yeast), this protein is CENP-A multicopy suppressor protein 2 (ams2).